A 378-amino-acid polypeptide reads, in one-letter code: Ribosomal RNA large subunit methyltransferase G (378 aa).

The protein belongs to the methyltransferase superfamily. RlmG family.

It localises to the cytoplasm. The enzyme catalyses guanosine(1835) in 23S rRNA + S-adenosyl-L-methionine = N(2)-methylguanosine(1835) in 23S rRNA + S-adenosyl-L-homocysteine + H(+). Its function is as follows. Specifically methylates the guanine in position 1835 (m2G1835) of 23S rRNA. The protein is Ribosomal RNA large subunit methyltransferase G of Salmonella agona (strain SL483).